The chain runs to 101 residues: MAKQSMKAREVKRVALADKYFAKRAELKAIISDVNASDEDRWNAVLKLQTLPRDSSPSRQRNRCRQTGRPHGFLRKFGLSRIKVREAAMRGEIPGLKKASW.

It belongs to the universal ribosomal protein uS14 family. Part of the 30S ribosomal subunit. Contacts proteins S3 and S10.

Functionally, binds 16S rRNA, required for the assembly of 30S particles and may also be responsible for determining the conformation of the 16S rRNA at the A site. The polypeptide is Small ribosomal subunit protein uS14 (Escherichia coli O139:H28 (strain E24377A / ETEC)).